Reading from the N-terminus, the 309-residue chain is 4-hydroxy-3-methylbut-2-enyl diphosphate reductase (309 aa).

Cysteine 13 provides a ligand contact to [4Fe-4S] cluster. Histidine 42 and histidine 75 together coordinate (2E)-4-hydroxy-3-methylbut-2-enyl diphosphate. Positions 42 and 75 each coordinate dimethylallyl diphosphate. Isopentenyl diphosphate-binding residues include histidine 42 and histidine 75. [4Fe-4S] cluster is bound at residue cysteine 97. Residue histidine 125 coordinates (2E)-4-hydroxy-3-methylbut-2-enyl diphosphate. Histidine 125 provides a ligand contact to dimethylallyl diphosphate. Isopentenyl diphosphate is bound at residue histidine 125. Glutamate 127 serves as the catalytic Proton donor. Position 165 (threonine 165) interacts with (2E)-4-hydroxy-3-methylbut-2-enyl diphosphate. Cysteine 195 contacts [4Fe-4S] cluster. Residues serine 223, serine 224, asparagine 225, and serine 267 each coordinate (2E)-4-hydroxy-3-methylbut-2-enyl diphosphate. The dimethylallyl diphosphate site is built by serine 223, serine 224, asparagine 225, and serine 267. Residues serine 223, serine 224, asparagine 225, and serine 267 each coordinate isopentenyl diphosphate.

The protein belongs to the IspH family. It depends on [4Fe-4S] cluster as a cofactor.

The enzyme catalyses isopentenyl diphosphate + 2 oxidized [2Fe-2S]-[ferredoxin] + H2O = (2E)-4-hydroxy-3-methylbut-2-enyl diphosphate + 2 reduced [2Fe-2S]-[ferredoxin] + 2 H(+). The catalysed reaction is dimethylallyl diphosphate + 2 oxidized [2Fe-2S]-[ferredoxin] + H2O = (2E)-4-hydroxy-3-methylbut-2-enyl diphosphate + 2 reduced [2Fe-2S]-[ferredoxin] + 2 H(+). The protein operates within isoprenoid biosynthesis; dimethylallyl diphosphate biosynthesis; dimethylallyl diphosphate from (2E)-4-hydroxy-3-methylbutenyl diphosphate: step 1/1. Its pathway is isoprenoid biosynthesis; isopentenyl diphosphate biosynthesis via DXP pathway; isopentenyl diphosphate from 1-deoxy-D-xylulose 5-phosphate: step 6/6. Its function is as follows. Catalyzes the conversion of 1-hydroxy-2-methyl-2-(E)-butenyl 4-diphosphate (HMBPP) into a mixture of isopentenyl diphosphate (IPP) and dimethylallyl diphosphate (DMAPP). Acts in the terminal step of the DOXP/MEP pathway for isoprenoid precursor biosynthesis. In Chlamydia abortus (strain DSM 27085 / S26/3) (Chlamydophila abortus), this protein is 4-hydroxy-3-methylbut-2-enyl diphosphate reductase.